The primary structure comprises 394 residues: Na(+)/H(+) antiporter NhaA (394 aa).

A run of 11 helical transmembrane segments spans residues 14-34 (AGGI…NSVF), 59-79 (LLMW…GMEV), 95-115 (IFPA…YWFI), 125-145 (GWAI…ALLS), 155-175 (FLLA…ALFF), 177-197 (NELS…LITM), 204-224 (GIIH…KSGV), 258-278 (WCAF…SLAG), 292-312 (ITLG…YLAV), 328-348 (VFAI…IAGL), and 362-382 (LSRL…YILL).

The protein belongs to the NhaA Na(+)/H(+) (TC 2.A.33) antiporter family.

Its subcellular location is the cell inner membrane. The enzyme catalyses Na(+)(in) + 2 H(+)(out) = Na(+)(out) + 2 H(+)(in). Its function is as follows. Na(+)/H(+) antiporter that extrudes sodium in exchange for external protons. In Haemophilus ducreyi (strain 35000HP / ATCC 700724), this protein is Na(+)/H(+) antiporter NhaA.